Consider the following 269-residue polypeptide: MQLPANPFKAALRRAEPLYGIWAGFATPYAAEIIATTGYDWMLVDGEHAPNTVPTLLGQLQAVAPYATHPVVRAVQGDTVLIKQLLDVGVQTLMVPMVETAEQARELVRAMRYPPHGVRGVGGGLTRATRWDAVPDYIRTAHEQLCLIVQIESPRGVAHAAEIAAVEGVDAVFIGPADLSTGMGHAGDASQGEVQEAIRRTVQATLAAGKACGILAPREEDARRYADWGCRFIAVGIDISLLRQAALANLGRYRATQATDQAAPASRTY.

His-48 (proton acceptor) is an active-site residue. A divalent metal cation-binding residues include Glu-152 and Asp-178.

It belongs to the HpcH/HpaI aldolase family. The cofactor is a divalent metal cation.

It carries out the reaction D-glyceraldehyde + pyruvate = 2-dehydro-3-deoxy-L-galactonate. Aldolase which can catalyze in vitro the aldolisation reaction between hydroxypyruvate (HPA) or pyruvate (PA) and D-glyceraldehyde (D-GA). The condensation of pyruvate and D-glyceraldehyde produces 2-dehydro-3-deoxy-L-galactonate as the major product. Has weak activity with hydroxypyruvate and D-glyceraldehyde. The chain is Hydroxypyruvate/pyruvate aldolase from Delftia acidovorans (strain DSM 14801 / SPH-1).